The following is a 421-amino-acid chain: Magnesium transporter MRS2-5 (421 aa).

The next 2 helical transmembrane spans lie at 357 to 377 (LLLT…AVFG) and 393 to 413 (YVLL…VLYF). Positions 377-379 (GMN) match the Required for magnesium transport activity motif.

It belongs to the CorA metal ion transporter (MIT) (TC 1.A.35.5) family. As to expression, expressed in the whole plant.

The protein localises to the membrane. In terms of biological role, magnesium transporter that may mediate the influx of magnesium. The chain is Magnesium transporter MRS2-5 (MRS2-5) from Arabidopsis thaliana (Mouse-ear cress).